We begin with the raw amino-acid sequence, 107 residues long: Regulatory protein SoxS (107 aa).

The 99-residue stretch at 8–106 (QTLIEWIDEH…DRTPSDYRHR (99 aa)) folds into the HTH araC/xylS-type domain. 2 consecutive DNA-binding regions (H-T-H motif) follow at residues 25–46 (DVVA…RTVT) and 73–96 (IFDI…RREF).

Its subcellular location is the cytoplasm. Its function is as follows. Transcriptional activator of the superoxide response regulon of E.coli that includes at least 10 genes such as sodA, nfo, zwf and micF. Binds the DNA sequence 5'-GCACN(7)CAA-3'. It also facilitates the subsequent binding of RNA polymerase to the micF and the nfo promoters. The protein is Regulatory protein SoxS (soxS) of Salmonella typhimurium (strain LT2 / SGSC1412 / ATCC 700720).